We begin with the raw amino-acid sequence, 702 residues long: Arginine decarboxylase 1, chloroplastic (702 aa).

Residues 1–52 constitute a chloroplast transit peptide; that stretch reads MPALAFVDTPIDTFSSIFTPSSVSTAVVDGSCHWSPSLSSSLYRIDGWGAPY. The residue at position 136 (K136) is an N6-(pyridoxal phosphate)lysine. Residues S288, G325, and 374-377 contribute to the pyridoxal 5'-phosphate site; that span reads ESGR. 320-330 provides a ligand contact to substrate; sequence IDIGGGLGIDY. 436–437 provides a ligand contact to substrate; it reads YV. C524 serves as the catalytic Proton donor; shared with dimeric partner. D525 contributes to the substrate binding site. Y565 contributes to the pyridoxal 5'-phosphate binding site.

The protein belongs to the Orn/Lys/Arg decarboxylase class-II family. SpeA subfamily. Homodimer. Only the dimer is catalytically active, as the active sites are constructed of residues from both monomers. May form a head-to-tail homodimer. Homodimer and heterodimer with ADC2. Requires pyridoxal 5'-phosphate as cofactor. The cofactor is Mg(2+).

It localises to the plastid. Its subcellular location is the chloroplast. The protein localises to the cytoplasm. The protein resides in the cytosol. The catalysed reaction is L-arginine + H(+) = agmatine + CO2. Its pathway is amine and polyamine biosynthesis; agmatine biosynthesis; agmatine from L-arginine: step 1/1. Its function is as follows. Required for the biosynthesis of putrescine. Catalyzes the first step of polyamine (PA) biosynthesis to produce putrescine from arginine. Is a minor contributor to basal arginine decarboxylase (ADC) activity and putrescine biosynthesis. Accumulation of putrescine plays a positive role in freezing tolerance. Production of polyamines is essential for normal seed development. Controls PA homeostasis which is crucial for normal plant growth and development. This is Arginine decarboxylase 1, chloroplastic from Arabidopsis thaliana (Mouse-ear cress).